The sequence spans 455 residues: Adenylyltransferase and sulfurtransferase UBA4 (455 aa).

Residues Gly-93, Asp-114, 121 to 125, Lys-138, and 182 to 183 each bind ATP; these read SNLHR and DH. Positions 224 and 227 each coordinate Zn(2+). Cys-241 serves as the catalytic Glycyl thioester intermediate; for adenylyltransferase activity. Positions 302 and 305 each coordinate Zn(2+). Residues 355–453 form the Rhodanese domain; it reads QSREHTLIDV…WSEDIDAAFP (99 aa). The active-site Cysteine persulfide intermediate; for sulfurtransferase activity is the Cys-413.

The protein in the N-terminal section; belongs to the HesA/MoeB/ThiF family. UBA4 subfamily. Zn(2+) serves as cofactor.

It is found in the cytoplasm. The protein localises to the cytosol. The protein operates within tRNA modification; 5-methoxycarbonylmethyl-2-thiouridine-tRNA biosynthesis. Plays a central role in 2-thiolation of mcm(5)S(2)U at tRNA wobble positions of cytosolic tRNA(Lys), tRNA(Glu) and tRNA(Gln). Acts by mediating the C-terminal thiocarboxylation of sulfur carrier URM1. Its N-terminus first activates URM1 as acyl-adenylate (-COAMP), then the persulfide sulfur on the catalytic cysteine is transferred to URM1 to form thiocarboxylation (-COSH) of its C-terminus. The reaction probably involves hydrogen sulfide that is generated from the persulfide intermediate and that acts as a nucleophile towards URM1. Subsequently, a transient disulfide bond is formed. Does not use thiosulfate as sulfur donor; NFS1 probably acting as a sulfur donor for thiocarboxylation reactions. Prior mcm(5) tRNA modification by the elongator complex is required for 2-thiolation. May also be involved in protein urmylation. The protein is Adenylyltransferase and sulfurtransferase UBA4 of Lodderomyces elongisporus (strain ATCC 11503 / CBS 2605 / JCM 1781 / NBRC 1676 / NRRL YB-4239) (Yeast).